The chain runs to 99 residues: Plastocyanin (99 aa).

A Plastocyanin-like domain is found at 1 to 99 (VEVLLGASDG…AGMVGQVTVN (99 aa)). The Cu cation site is built by H37, C84, H87, and M92.

This sequence belongs to the plastocyanin family. Cu(2+) serves as cofactor.

It is found in the plastid. The protein localises to the chloroplast thylakoid membrane. Functionally, participates in electron transfer between P700 and the cytochrome b6-f complex in photosystem I. In Vicia faba (Broad bean), this protein is Plastocyanin (PETE).